Here is a 237-residue protein sequence, read N- to C-terminus: DNA repair protein RecO (237 aa).

It belongs to the RecO family.

Functionally, involved in DNA repair and RecF pathway recombination. In Rickettsia rickettsii (strain Iowa), this protein is DNA repair protein RecO.